Reading from the N-terminus, the 593-residue chain is Protein GAMETE EXPRESSED 1 (593 aa).

An N-terminal signal peptide occupies residues 1–24 (MDRFSRKCLLFLLLIILLDSPLTC). The Extracellular segment spans residues 25–427 (HSWGWFSSSS…LHNAMLLESR (403 aa)). Coiled-coil stretches lie at residues 156–194 (CQQL…SKSD) and 350–387 (EALQ…HDHL). Residues 428–448 (VIKAFVIYFLSIFVIYMFTST) form a helical membrane-spanning segment. The Cytoplasmic segment spans residues 449–457 (KQTYIIRPR). The chain crosses the membrane as a helical span at residues 458–476 (LYIGLCVTLALEVASLRYV). At 477–485 (NDTERQAWM) the chain is on the extracellular side. The chain crosses the membrane as a helical span at residues 486 to 506 (INLIRSLFALLASAQLLHAAL). The Cytoplasmic portion of the chain corresponds to 507–593 (SYRDYEVLNH…TRRLYNFRPR (87 aa)).

In terms of assembly, homodimer. As to expression, in tricellular pollen, expressed in mature sperm cells. Not expressed in bicellular or unicellular pollen. Detected in ovules, roots and guard cells. Expressed in the embryo sac before cellularization, in the egg cell after cellularization, in the zygote/embryo immediately after fertilization and in the pollen vegetative cell.

The protein localises to the cell membrane. Functionally, has a dual function during gametophyte development and early embryogenesis. Required for correct pollen maturation. The chain is Protein GAMETE EXPRESSED 1 (GEX1) from Arabidopsis thaliana (Mouse-ear cress).